A 126-amino-acid chain; its full sequence is Aspartate 1-decarboxylase (126 aa).

Serine 25 (schiff-base intermediate with substrate; via pyruvic acid) is an active-site residue. Serine 25 bears the Pyruvic acid (Ser) mark. Threonine 57 contacts substrate. Tyrosine 58 serves as the catalytic Proton donor. Residue 73–75 (GAA) coordinates substrate.

The protein belongs to the PanD family. As to quaternary structure, heterooctamer of four alpha and four beta subunits. Pyruvate is required as a cofactor. In terms of processing, is synthesized initially as an inactive proenzyme, which is activated by self-cleavage at a specific serine bond to produce a beta-subunit with a hydroxyl group at its C-terminus and an alpha-subunit with a pyruvoyl group at its N-terminus.

It localises to the cytoplasm. The catalysed reaction is L-aspartate + H(+) = beta-alanine + CO2. It participates in cofactor biosynthesis; (R)-pantothenate biosynthesis; beta-alanine from L-aspartate: step 1/1. Catalyzes the pyruvoyl-dependent decarboxylation of aspartate to produce beta-alanine. In Alcanivorax borkumensis (strain ATCC 700651 / DSM 11573 / NCIMB 13689 / SK2), this protein is Aspartate 1-decarboxylase.